The sequence spans 591 residues: CTP synthase 1 (591 aa).

N6-acetyllysine is present on Lys100. In terms of domain architecture, Glutamine amidotransferase type-1 spans 300–554 (SIALVGKYTK…LASVGRLSHY (255 aa)). Catalysis depends on for GATase activity residues Cys399, His526, and Glu528. Phosphoserine occurs at positions 562, 568, 571, 573, 574, 575, 578, and 587. The segment at 562–591 (SPRDTYSDRSGSSSPDSEITELKFPSINHD) is disordered. Positions 569–578 (DRSGSSSPDS) are enriched in low complexity.

It belongs to the CTP synthase family. In terms of tissue distribution, widely expressed.

Its subcellular location is the cytoplasm. It is found in the cytosol. The catalysed reaction is UTP + L-glutamine + ATP + H2O = CTP + L-glutamate + ADP + phosphate + 2 H(+). Its pathway is pyrimidine metabolism; CTP biosynthesis via de novo pathway; CTP from UDP: step 2/2. Its activity is regulated as follows. Activated by GTP and inhibited by CTP. In terms of biological role, this enzyme is involved in the de novo synthesis of CTP, a precursor of DNA, RNA and phospholipids. Catalyzes the ATP-dependent amination of UTP to CTP with either L-glutamine or ammonia as a source of nitrogen. This enzyme and its product, CTP, play a crucial role in the proliferation of activated lymphocytes and therefore in immunity. This is CTP synthase 1 from Homo sapiens (Human).